A 300-amino-acid polypeptide reads, in one-letter code: Solute carrier family 25 member 35 (300 aa).

Solcar repeat units follow at residues 1–90 (MDFL…AESR), 100–193 (HSPV…IKDL), and 203–294 (QSWK…LRSF). The next 6 membrane-spanning stretches (helical) occupy residues 38-58 (TYQRHYRNVFHAFFTIGKVDG), 59-79 (LAALQKGLGPALLYQFLMNGI), 91-119 (GYLHTNEGTHSPVRSAAAGALAGVMGAYL), 169-190 (AVGGLPRVVIGSSTQLCTFSSI), 205-225 (WKVALAAAMVSGVAIVVAMTP), and 277-300 (LGPHTILSLFFWDQLRSFYNTYAK).

It belongs to the mitochondrial carrier (TC 2.A.29) family.

The protein localises to the mitochondrion inner membrane. The catalysed reaction is a dicarboxylate(in) + sulfate(out) = a dicarboxylate(out) + sulfate(in). Its function is as follows. Putative antiporter that exchanges dicarboxylates and sulfur oxoanions across the inner membrane of mitochondria. The chain is Solute carrier family 25 member 35 (Slc25a35) from Mus musculus (Mouse).